We begin with the raw amino-acid sequence, 461 residues long: Phosphatidate cytidylyltransferase 1 (461 aa).

Positions 1 to 68 are disordered; the sequence is MLELRHRGGC…PEVPPSSDRT (68 aa). Residue Arg-7 is modified to Omega-N-methylarginine. Residues 22-56 show a composition bias toward basic and acidic residues; that stretch reads REGEAAGGDHETESTSDKETDIDDRYGDLDARGDS. 2 positions are modified to phosphoserine: Ser-35 and Ser-37. 6 helical membrane passes run 96 to 116, 149 to 169, 183 to 203, 230 to 250, 279 to 299, and 357 to 377; these read MISL…LLVL, FLLC…FATF, HRFI…LSLV, LVIQ…SSVI, GFIG…YVLS, and IALS…ASGF.

The protein belongs to the CDS family. As to quaternary structure, homodimer. Interacts with FOS; this interaction may enhance catalytic activity. The cofactor is Mg(2+). As to expression, expressed in adult brain, eye, smooth muscle and testis. Highly expressed in the inner segment of the photoreceptor layer of adult retina.

Its subcellular location is the endoplasmic reticulum membrane. The catalysed reaction is a 1,2-diacyl-sn-glycero-3-phosphate + CTP + H(+) = a CDP-1,2-diacyl-sn-glycerol + diphosphate. The enzyme catalyses 1-octadecanoyl-2-(5Z,8Z,11Z,14Z-eicosatetraenoyl)-sn-glycero-3-phosphate + CTP + H(+) = 1-octadecanoyl-2-(5Z,8Z,11Z,14Z-eicosatetraenoyl)-sn-glycero-3-cytidine-5'-diphosphate + diphosphate. It catalyses the reaction 1-octadecanoyl-2-(9Z,12Z-octadecadienoyl)-sn-glycero-3-phosphate + CTP + H(+) = 1-octadecanoyl-2-(9Z,12Z-octadecadienoyl)-sn-glycero-3-cytidine-5'-diphosphate + diphosphate. It carries out the reaction 1-hexadecanoyl-2-(5Z,8Z,11Z,14Z-eicosatetraenoyl)-sn-glycero-3-phosphate + CTP + H(+) = 1-hexadecanoyl-2-(5Z,8Z,11Z,14Z-eicosatetraenoyl)-sn-glycero-3-cytidine-5'-diphosphate + diphosphate. The catalysed reaction is 1,2-di-(5Z,8Z,11Z,14Z)-eicosatetraenoyl-sn-glycero-3-phosphate + CTP + H(+) = 1,2-di-(5Z,8Z,11Z,14Z-eicosatetraenoyl)-sn-glycero-3-cytidine-5'-diphosphate + diphosphate. The enzyme catalyses 1-octadecanoyl-2-(9Z-octadecenoyl)-sn-glycero-3-phosphate + CTP + H(+) = 1-octadecanoyl-2-(9Z-octadecenoyl)-sn-glycero-3-cytidine-5'-diphosphate + diphosphate. It catalyses the reaction 1-octadecanoyl-2-(4Z,7Z,10Z,13Z,16Z,19Z-docosahexaenoyl)-sn-glycero-3-phosphate + CTP + H(+) = 1-octadecanoyl-2-(4Z,7Z,10Z,13Z,16Z,19Z-docosahexaenoyl)-sn-glycero-3-cytidine-5'-diphosphate + diphosphate. It carries out the reaction 1,2-di-(9Z,12Z-octadecadienoyl)-sn-glycero-3-phosphate + CTP + H(+) = 1,2-di-(9Z,12Z-octadecadienoyl)-sn-glycero-3-cytidine-5'-diphosphate + diphosphate. The catalysed reaction is 1,2-di-(9Z-octadecenoyl)-sn-glycero-3-phosphate + CTP + H(+) = 1,2-di-(9Z-octadecenoyl)-sn-glycero-3-cytidine-5'-diphosphate + diphosphate. The protein operates within phospholipid metabolism; CDP-diacylglycerol biosynthesis; CDP-diacylglycerol from sn-glycerol 3-phosphate: step 3/3. Its function is as follows. Catalyzes the conversion of phosphatidic acid (PA) to CDP-diacylglycerol (CDP-DAG), an essential intermediate in the synthesis of phosphatidylglycerol, cardiolipin and phosphatidylinositol. Exhibits almost no acyl chain preference for PA, showing no discrimination for the sn-1/sn-2 acyl chain composition of PAs. Plays an important role in regulating the growth of lipid droplets which are storage organelles at the center of lipid and energy homeostasis. Positively regulates the differentiation and development of adipocytes. This Mus musculus (Mouse) protein is Phosphatidate cytidylyltransferase 1.